Reading from the N-terminus, the 160-residue chain is Large ribosomal subunit protein bL19 (160 aa).

2 stretches are compositionally biased toward basic and acidic residues: residues 1–15 and 28–39; these read MTED…KEES and ATRETKPKDSPS. The tract at residues 1 to 44 is disordered; the sequence is MTEDLKNTSPSKEESNEIEESSKATPKATRETKPKDSPSKTKLS.

This sequence belongs to the bacterial ribosomal protein bL19 family.

Functionally, this protein is located at the 30S-50S ribosomal subunit interface and may play a role in the structure and function of the aminoacyl-tRNA binding site. The chain is Large ribosomal subunit protein bL19 from Prochlorococcus marinus (strain SARG / CCMP1375 / SS120).